A 185-amino-acid polypeptide reads, in one-letter code: Ribosome-recycling factor (185 aa).

The protein belongs to the RRF family.

It localises to the cytoplasm. In terms of biological role, responsible for the release of ribosomes from messenger RNA at the termination of protein biosynthesis. May increase the efficiency of translation by recycling ribosomes from one round of translation to another. This is Ribosome-recycling factor from Tolumonas auensis (strain DSM 9187 / NBRC 110442 / TA 4).